A 286-amino-acid chain; its full sequence is Bifunctional protein FolD (286 aa).

Residues Gly168–Gly170, Thr195, and Val236 each bind NADP(+).

This sequence belongs to the tetrahydrofolate dehydrogenase/cyclohydrolase family. Homodimer.

It catalyses the reaction (6R)-5,10-methylene-5,6,7,8-tetrahydrofolate + NADP(+) = (6R)-5,10-methenyltetrahydrofolate + NADPH. The enzyme catalyses (6R)-5,10-methenyltetrahydrofolate + H2O = (6R)-10-formyltetrahydrofolate + H(+). The protein operates within one-carbon metabolism; tetrahydrofolate interconversion. Its function is as follows. Catalyzes the oxidation of 5,10-methylenetetrahydrofolate to 5,10-methenyltetrahydrofolate and then the hydrolysis of 5,10-methenyltetrahydrofolate to 10-formyltetrahydrofolate. In Mycolicibacterium gilvum (strain PYR-GCK) (Mycobacterium gilvum (strain PYR-GCK)), this protein is Bifunctional protein FolD.